The sequence spans 395 residues: MGIKQLFQIIKEEAPDAIKEGEIKNQFGRKVAIDASMSIYSFLIAVRSDGQQLMNDSGETTSHLMGMFYRTLRMVDNGIKPLYVFDGAPPKLKSGELAKRFQRKQEATEGLEEAKETGTAEDIEKFSRRTVRVTREHNAECQRLLKLMGIPYIIAPTEAEAQCAVLAQAGKVYAAASEDMDTLCFNSPILLRHLTFSEQRKEPIQEIHLEKVLEGLGMERKQFVDLCILLGCDYLDPIPKVGPTTALKLIRDHGSLEKIVEAMEKDPKKKYVLPEDWPYKDARDLFFEPDVRKADDPECDVKWEKPDMEGLVQFLVTEKGFSEDRVRSGGARLEKNLKSSQQARLEGFFKPVPKTDAQKAAHKRKLEEKNEEKKKKLKQEKKDKAAAKSKPRGAA.

The N-domain stretch occupies residues 1-104; that stretch reads MGIKQLFQII…GELAKRFQRK (104 aa). A Mg(2+)-binding site is contributed by Asp34. DNA contacts are provided by Arg47 and Arg70. 5 residues coordinate Mg(2+): Asp86, Glu158, Glu160, Asp179, and Asp181. Positions 122–253 are I-domain; that stretch reads DIEKFSRRTV…TTALKLIRDH (132 aa). Glu158 contributes to the DNA binding site. DNA is bound by residues Gly231 and Asp233. Mg(2+) is bound at residue Asp233. The interaction with PCNA stretch occupies residues 341 to 349; that stretch reads QQARLEGFF. Residues 344–395 are disordered; it reads RLEGFFKPVPKTDAQKAAHKRKLEEKNEEKKKKLKQEKKDKAAAKSKPRGAA. Residues 365-386 show a composition bias toward basic and acidic residues; that stretch reads KLEEKNEEKKKKLKQEKKDKAA.

It belongs to the XPG/RAD2 endonuclease family. FEN1 subfamily. Interacts with PCNA. Three molecules of FEN1 bind to one PCNA trimer with each molecule binding to one PCNA monomer. PCNA stimulates the nuclease activity without altering cleavage specificity. Mg(2+) is required as a cofactor. In terms of processing, phosphorylated. Phosphorylation upon DNA damage induces relocalization to the nuclear plasma.

The protein resides in the nucleus. Its subcellular location is the nucleolus. The protein localises to the nucleoplasm. It localises to the mitochondrion. Functionally, structure-specific nuclease with 5'-flap endonuclease and 5'-3' exonuclease activities involved in DNA replication and repair. During DNA replication, cleaves the 5'-overhanging flap structure that is generated by displacement synthesis when DNA polymerase encounters the 5'-end of a downstream Okazaki fragment. It enters the flap from the 5'-end and then tracks to cleave the flap base, leaving a nick for ligation. Also involved in the long patch base excision repair (LP-BER) pathway, by cleaving within the apurinic/apyrimidinic (AP) site-terminated flap. Acts as a genome stabilization factor that prevents flaps from equilibrating into structures that lead to duplications and deletions. Also possesses 5'-3' exonuclease activity on nicked or gapped double-stranded DNA, and exhibits RNase H activity. Also involved in replication and repair of rDNA and in repairing mitochondrial DNA. The chain is Flap endonuclease 1 from Fusarium vanettenii (strain ATCC MYA-4622 / CBS 123669 / FGSC 9596 / NRRL 45880 / 77-13-4) (Fusarium solani subsp. pisi).